The following is a 386-amino-acid chain: 8-amino-7-oxononanoate synthase (386 aa).

Arg19 is a binding site for substrate. 106–107 contributes to the pyridoxal 5'-phosphate binding site; it reads GY. His131 is a binding site for substrate. Ser177, His205, and Thr233 together coordinate pyridoxal 5'-phosphate. Lys236 is modified (N6-(pyridoxal phosphate)lysine). Thr350 serves as a coordination point for substrate.

It belongs to the class-II pyridoxal-phosphate-dependent aminotransferase family. BioF subfamily. Homodimer. The cofactor is pyridoxal 5'-phosphate.

The enzyme catalyses 6-carboxyhexanoyl-[ACP] + L-alanine + H(+) = (8S)-8-amino-7-oxononanoate + holo-[ACP] + CO2. It participates in cofactor biosynthesis; biotin biosynthesis. Its function is as follows. Catalyzes the decarboxylative condensation of pimeloyl-[acyl-carrier protein] and L-alanine to produce 8-amino-7-oxononanoate (AON), [acyl-carrier protein], and carbon dioxide. The protein is 8-amino-7-oxononanoate synthase of Alcanivorax borkumensis (strain ATCC 700651 / DSM 11573 / NCIMB 13689 / SK2).